The primary structure comprises 177 residues: Endoribonuclease YbeY (177 aa).

Zn(2+) contacts are provided by histidine 118, histidine 122, and histidine 128.

Belongs to the endoribonuclease YbeY family. Zn(2+) serves as cofactor.

The protein resides in the cytoplasm. In terms of biological role, single strand-specific metallo-endoribonuclease involved in late-stage 70S ribosome quality control and in maturation of the 3' terminus of the 16S rRNA. The sequence is that of Endoribonuclease YbeY from Mycobacterium sp. (strain JLS).